The sequence spans 167 residues: MKILVIQGPNLNMLGHRDPRLYGMVTLDQIHEIMQTFVKQGNLDVELEFFQTNFEGEIIDKIQESVGSDYEGIIINPGAFSHTSIAIADAIMLAGKPVIEVHLTNIQAREEFRKNSYTGAACGGVIMGFGPLGYNMALMAMVNILAEMKAFQEAQKNNPNNPINNQK.

The active-site Proton acceptor is the Tyr-22. Residues Asn-76, His-82, and Asp-89 each contribute to the substrate site. The Proton donor role is filled by His-102. Substrate is bound by residues Leu-103–Thr-104 and Arg-113.

The protein belongs to the type-II 3-dehydroquinase family. Homododecamer.

It catalyses the reaction 3-dehydroquinate = 3-dehydroshikimate + H2O. The protein operates within metabolic intermediate biosynthesis; chorismate biosynthesis; chorismate from D-erythrose 4-phosphate and phosphoenolpyruvate: step 3/7. Its function is as follows. Catalyzes a trans-dehydration via an enolate intermediate. The protein is 3-dehydroquinate dehydratase of Helicobacter pylori (strain P12).